A 274-amino-acid polypeptide reads, in one-letter code: 3-methyl-2-oxobutanoate hydroxymethyltransferase (274 aa).

D46 and D85 together coordinate Mg(2+). 3-methyl-2-oxobutanoate-binding positions include 46–47 (DS), D85, and K114. E116 is a Mg(2+) binding site. The active-site Proton acceptor is the E183.

Belongs to the PanB family. In terms of assembly, homodecamer; pentamer of dimers. It depends on Mg(2+) as a cofactor.

It is found in the cytoplasm. It carries out the reaction 3-methyl-2-oxobutanoate + (6R)-5,10-methylene-5,6,7,8-tetrahydrofolate + H2O = 2-dehydropantoate + (6S)-5,6,7,8-tetrahydrofolate. The protein operates within cofactor biosynthesis; coenzyme A biosynthesis. Catalyzes the reversible reaction in which hydroxymethyl group from 5,10-methylenetetrahydrofolate is transferred onto alpha-ketoisovalerate to form ketopantoate. This chain is 3-methyl-2-oxobutanoate hydroxymethyltransferase, found in Aeropyrum pernix (strain ATCC 700893 / DSM 11879 / JCM 9820 / NBRC 100138 / K1).